The sequence spans 313 residues: Cobalamin biosynthesis protein CobD (313 aa).

Transmembrane regions (helical) follow at residues 52–72 (VAGA…GAAL), 79–99 (CWPV…TSLA), 154–174 (VVPL…YRAI), 204–224 (YVGA…VGGS), and 289–309 (AVVL…MLVY).

Belongs to the CobD/CbiB family.

The protein resides in the cell membrane. It functions in the pathway cofactor biosynthesis; adenosylcobalamin biosynthesis. Converts cobyric acid to cobinamide by the addition of aminopropanol on the F carboxylic group. This Mycobacterium bovis (strain ATCC BAA-935 / AF2122/97) protein is Cobalamin biosynthesis protein CobD.